The sequence spans 567 residues: MRPDSPTMAAPAESLRRRKTGYSDPEPESPPAPGRGPAGSPAHLHTGTFWLTRIVLLKALAFVYFVAFLVAFHQNKQLIGDRGLLPCRVFLKNFQQYFQDRTSWEVFSYMPTILWLMDWSDMNSNLDLLALLGLGISSFVLITGCANMLLMAALWGLYMSLVNVGHVWYSFGWESQLLETGFLGIFLCPLWTLSRLPQHTPTSRIVLWGFRWLIFRIMLGAGLIKIRGDRCWRDLTCMDFHYETQPMPNPVAYYLHHSPWWFHRFETLSNHFIELLVPFFLFLGRRACIIHGVLQILFQAVLIVSGNLSFLNWLTMVPSLACFDDATLGFLFPSGPGSLKDRVLQMQRDIRGARPEPRFGSVVRRAANVSLGVLLAWLSVPVVLNLLSSRQVMNTHFNSLHIVNTYGAFGSITKERAEVILQGTASSNASAPDAMWEDYEFKCKPGDPSRRPCLISPYHYRLDWLMWFAAFQTYEHNDWIIHLAGKLLASDAEALSLLAHNPFAGRPPPRWVRGEHYRYKFSRPGGRHAAEGKWWVRKRIGAYFPPLSLEELRPYFRDRGWPLPGPL.

A disordered region spans residues 1-39 (MRPDSPTMAAPAESLRRRKTGYSDPEPESPPAPGRGPAG). At 1-49 (MRPDSPTMAAPAESLRRRKTGYSDPEPESPPAPGRGPAGSPAHLHTGTF) the chain is on the cytoplasmic side. A helical transmembrane segment spans residues 50-72 (WLTRIVLLKALAFVYFVAFLVAF). Residues 73–127 (HQNKQLIGDRGLLPCRVFLKNFQQYFQDRTSWEVFSYMPTILWLMDWSDMNSNLD) are Lumenal-facing. A helical transmembrane segment spans residues 128 to 151 (LLALLGLGISSFVLITGCANMLLM). Over 152–207 (AALWGLYMSLVNVGHVWYSFGWESQLLETGFLGIFLCPLWTLSRLPQHTPTSRIVL) the chain is Cytoplasmic. A helical membrane pass occupies residues 208–221 (WGFRWLIFRIMLGA). At 222–292 (GLIKIRGDRC…LGRRACIIHG (71 aa)) the chain is on the lumenal side. The helical transmembrane segment at 293-321 (VLQILFQAVLIVSGNLSFLNWLTMVPSLA) threads the bilayer. Residues 322–367 (CFDDATLGFLFPSGPGSLKDRVLQMQRDIRGARPEPRFGSVVRRAA) are Cytoplasmic-facing. Residues 368–388 (NVSLGVLLAWLSVPVVLNLLS) form a helical membrane-spanning segment. Over 389–567 (SRQVMNTHFN…DRGWPLPGPL (179 aa)) the chain is Lumenal.

The protein belongs to the lipase maturation factor family. Interacts with LPL and SEL1L.

It localises to the endoplasmic reticulum membrane. Its function is as follows. Involved in the maturation of specific proteins in the endoplasmic reticulum. Required for maturation and transport of active lipoprotein lipase (LPL) through the secretory pathway. Each LMF1 molecule chaperones 50 or more molecules of LPL. The protein is Lipase maturation factor 1 (LMF1) of Homo sapiens (Human).